The following is a 93-amino-acid chain: Co-chaperonin GroES 2 (93 aa).

The disordered stretch occupies residues 1-20; the sequence is MQPLGERIVVQREESETTTA.

This sequence belongs to the GroES chaperonin family. In terms of assembly, heptamer of 7 subunits arranged in a ring. Interacts with the chaperonin GroEL.

The protein resides in the cytoplasm. In terms of biological role, together with the chaperonin GroEL, plays an essential role in assisting protein folding. The GroEL-GroES system forms a nano-cage that allows encapsulation of the non-native substrate proteins and provides a physical environment optimized to promote and accelerate protein folding. GroES binds to the apical surface of the GroEL ring, thereby capping the opening of the GroEL channel. This Rhodopirellula baltica (strain DSM 10527 / NCIMB 13988 / SH1) protein is Co-chaperonin GroES 2.